The sequence spans 841 residues: Translation initiation factor IF-2 (841 aa).

A disordered region spans residues Arg87 to Pro254. The span at Ser96 to Arg135 shows a compositional bias: basic and acidic residues. Low complexity predominate over residues Ser136–Ala175. 2 stretches are compositionally biased toward basic and acidic residues: residues Asp176 to Pro217 and Thr225 to Arg234. Basic residues predominate over residues Arg235–Ala248. The 170-residue stretch at Ser341–Lys510 folds into the tr-type G domain. The interval Gly350 to Thr357 is G1. Gly350 to Thr357 contributes to the GTP binding site. Residues Gly375–His379 are G2. A G3 region spans residues Asp396–Gly399. GTP-binding positions include Asp396–His400 and Asn450–Asp453. A G4 region spans residues Asn450–Asp453. Residues Ser486 to Lys488 form a G5 region.

It belongs to the TRAFAC class translation factor GTPase superfamily. Classic translation factor GTPase family. IF-2 subfamily.

Its subcellular location is the cytoplasm. In terms of biological role, one of the essential components for the initiation of protein synthesis. Protects formylmethionyl-tRNA from spontaneous hydrolysis and promotes its binding to the 30S ribosomal subunits. Also involved in the hydrolysis of GTP during the formation of the 70S ribosomal complex. The polypeptide is Translation initiation factor IF-2 (Pseudomonas syringae pv. syringae (strain B728a)).